We begin with the raw amino-acid sequence, 549 residues long: Rhodopsin kinase grk7a (549 aa).

S33 is subject to Phosphoserine. The 119-residue stretch at 53–171 (FESLCEKQPI…QASPFFDKFL (119 aa)) folds into the RGS domain. A Protein kinase domain is found at 186–449 (FYEFRTLGKG…NDDPRKHEWF (264 aa)). ATP contacts are provided by residues 192–200 (LGKGGFGEV) and K215. The active-site Proton acceptor is the D311. Positions 450 to 515 (KSINFARLEA…GAVSIAWQQE (66 aa)) constitute an AGC-kinase C-terminal domain. The disordered stretch occupies residues 522 to 549 (FDELSDPNRKESSGGSDDDKKSGTCTLL). Residues 527–543 (DPNRKESSGGSDDDKKS) show a composition bias toward basic and acidic residues. Position 546 is a cysteine methyl ester (C546). The S-geranylgeranyl cysteine moiety is linked to residue C546. Residues 547–549 (TLL) constitute a propeptide, removed in mature form.

This sequence belongs to the protein kinase superfamily. AGC Ser/Thr protein kinase family. GPRK subfamily. Phosphorylation at Ser-33 is regulated by light and activated by cAMP.

It localises to the membrane. It catalyses the reaction L-threonyl-[rhodopsin] + ATP = O-phospho-L-threonyl-[rhodopsin] + ADP + H(+). It carries out the reaction L-seryl-[rhodopsin] + ATP = O-phospho-L-seryl-[rhodopsin] + ADP + H(+). In terms of biological role, retina-specific kinase involved in the shutoff of the photoresponse and adaptation to changing light conditions via cone opsin phosphorylation, including rhodopsin (RHO). The sequence is that of Rhodopsin kinase grk7a (grk7a) from Danio rerio (Zebrafish).